A 487-amino-acid chain; its full sequence is Acetylcholine receptor subunit beta-type acr-3 (487 aa).

Residues 1–20 (MQKIWLFSIITIFLITELQC) form the signal peptide. At 21–231 (YPNSAEERLL…KIRRKALFYT (211 aa)) the chain is on the extracellular side. N-linked (GlcNAc...) asparagine glycosylation occurs at Asn-46. Cys-151 and Cys-165 form a disulfide bridge. 3 helical membrane passes run 232–252 (VILI…FYLP), 259–279 (ITLA…VSKI), and 294–314 (LLMT…IINV). The Cytoplasmic segment spans residues 315–439 (YFRGPATHIM…WKFVSVVIDR (125 aa)). Residues 380–400 (ISEQPKQTSRKDGSSSEEKLS) form a disordered region. A helical transmembrane segment spans residues 440–460 (LLLYLFFAVTTGGTVGILLSA).

The protein belongs to the ligand-gated ion channel (TC 1.A.9) family. Acetylcholine receptor (TC 1.A.9.1) subfamily. Component of nicotinic acetylcholine receptor. In cholinergic motoneurons, composed of 2 non-alpha subunits acr-2 and acr-3, and 3 alpha subunits unc-38, unc-63 and acr-12.

The protein localises to the postsynaptic cell membrane. The protein resides in the cell membrane. Non-alpha subunit of nicotinic acetylcholine receptor (nAChR). Probably acts in cholinergic motoneurons to regulate presynaptic neurotransmitter release, thereby ensuring normal level of excitation of cholinergic motoneurons during locomotion. The protein is Acetylcholine receptor subunit beta-type acr-3 (acr-3) of Caenorhabditis elegans.